Reading from the N-terminus, the 988-residue chain is UPF0182 protein MAB_3498c (988 aa).

The next 7 membrane-spanning stretches (helical) occupy residues 19-39 (LVAA…LVDT), 63-83 (LALF…GFGL), 114-134 (LFLI…AQSY), 176-196 (FIAA…FGGI), 211-231 (IQLI…YWLD), 260-280 (KLIL…ALVL), and 288-308 (IGLA…PLIV).

This sequence belongs to the UPF0182 family.

It is found in the cell membrane. The chain is UPF0182 protein MAB_3498c from Mycobacteroides abscessus (strain ATCC 19977 / DSM 44196 / CCUG 20993 / CIP 104536 / JCM 13569 / NCTC 13031 / TMC 1543 / L948) (Mycobacterium abscessus).